A 417-amino-acid chain; its full sequence is Serine--tRNA ligase (417 aa).

Thr226–Glu228 contributes to the L-serine binding site. Residues Arg257 to Glu259 and Val273 contribute to the ATP site. Glu280 serves as a coordination point for L-serine. ATP is bound at residue Glu344–Ser347. Residue Thr379 coordinates L-serine.

It belongs to the class-II aminoacyl-tRNA synthetase family. Type-1 seryl-tRNA synthetase subfamily. In terms of assembly, homodimer. The tRNA molecule binds across the dimer.

It is found in the cytoplasm. The catalysed reaction is tRNA(Ser) + L-serine + ATP = L-seryl-tRNA(Ser) + AMP + diphosphate + H(+). It carries out the reaction tRNA(Sec) + L-serine + ATP = L-seryl-tRNA(Sec) + AMP + diphosphate + H(+). It functions in the pathway aminoacyl-tRNA biosynthesis; selenocysteinyl-tRNA(Sec) biosynthesis; L-seryl-tRNA(Sec) from L-serine and tRNA(Sec): step 1/1. In terms of biological role, catalyzes the attachment of serine to tRNA(Ser). Is also able to aminoacylate tRNA(Sec) with serine, to form the misacylated tRNA L-seryl-tRNA(Sec), which will be further converted into selenocysteinyl-tRNA(Sec). This is Serine--tRNA ligase from Tropheryma whipplei (strain Twist) (Whipple's bacillus).